We begin with the raw amino-acid sequence, 262 residues long: Late embryogenesis abundant protein 31 (262 aa).

Residues 6-10 carry the Nuclear localization signal (NLS) motif; the sequence is QPKRP. SMP domains follow at residues 14 to 68, 136 to 192, and 201 to 260; these read VTYG…ANKR, ITIG…NHNA, and IKLI…NERA.

Belongs to the LEA type SMP family. In terms of tissue distribution, embryo specific, only in dry mature seeds.

The protein resides in the nucleus. It localises to the nucleolus. The protein localises to the cytoplasm. Its function is as follows. LEA proteins are late embryonic proteins abundant in higher plant seed embryos. The function of those proteins is not known. Promotes germination rate. Enhances cation toxicity (e.g. lithium ion) and osmotic stress (e.g. NaCl and sorbitol) tolerance during germination and in seedlings. This is Late embryogenesis abundant protein 31 from Arabidopsis thaliana (Mouse-ear cress).